The primary structure comprises 1197 residues: Serine/threonine-protein kinase pakA (1197 aa).

Disordered stretches follow at residues 1–96 (MEEK…PIYR), 328–383 (QKED…KNID), 430–468 (REEEEENEDRVERELASRRRQEEDRIKREEEEEEEEQRN), 485–543 (EEEE…NLMG), and 562–819 (NSSG…RVGT). Positions 19–30 (QKFEQFLDKTDK) are enriched in basic and acidic residues. Over residues 34–49 (ATRNNYRGPVSSSTGI) the composition is skewed to polar residues. The segment covering 51-69 (NDKEKKSHSYFKVREEGSN) has biased composition (basic and acidic residues). Residues 70-79 (KRPSSFSASN) are compositionally biased toward polar residues. Low complexity-rich tracts occupy residues 80–94 (PITPSSPQSTHSSPI) and 346–381 (NNNNNENNENDNNNNNNNNNNNNNNNNNNNNNNNKN). Basic and acidic residues predominate over residues 439 to 458 (RVERELASRRRQEEDRIKRE). Low complexity predominate over residues 494 to 523 (SQLQSSQQQQKSSSTQRSSNTVTSTSSSST). The segment covering 524-536 (GGDSNPSTSQKPT) has biased composition (polar residues). At T585 the chain carries Phosphothreonine; by PKB. A compositionally biased stretch (polar residues) spans 593–615 (SENTPLVSSIDNNGVNNKMSRSH). 2 stretches are compositionally biased toward low complexity: residues 636-653 (NVNNSNNNNNNNNINNNH) and 671-707 (SSSMSTPSISPSQAGNSATSTVPSSPISASTSMSSPT). Residues 718-727 (TTSTGSTRKG) show a composition bias toward polar residues. Residues 728-737 (SISEREDKKK) show a composition bias toward basic and acidic residues. Over residues 739 to 756 (SSSSTSSSSSSNGGLSSS) the composition is skewed to low complexity. The segment covering 757-790 (GKDHKKDHSSEEKEKEKKSFFNKLFSKEKKDHHS) has biased composition (basic and acidic residues). In terms of domain architecture, CRIB spans 817-830 (VGTPFNVKHDVHVN). Positions 911–1164 (YYNINKIGEG…SSSLLHHPFL (254 aa)) constitute a Protein kinase domain. Residues 917–925 (IGEGGAGEV) and K940 each bind ATP. The active-site Proton acceptor is the D1032.

This sequence belongs to the protein kinase superfamily. STE Ser/Thr protein kinase family. STE20 subfamily. It depends on Mg(2+) as a cofactor. Post-translationally, phosphorylation on Thr-585 results in cAMP-mediated activation and localization to the cytoskeleton. In terms of tissue distribution, colocalizes with myosin II to the cleavage furrow of cells undergoing cytokinesis and the posterior cortex of polarized cells.

The protein resides in the cytoplasm. It is found in the cytosol. Its subcellular location is the cytoskeleton. It carries out the reaction L-seryl-[protein] + ATP = O-phospho-L-seryl-[protein] + ADP + H(+). It catalyses the reaction L-threonyl-[protein] + ATP = O-phospho-L-threonyl-[protein] + ADP + H(+). In terms of biological role, regulator of the myosin II component of the cytoskeleton: required for regulation of cytokinesis. Functions during chemotaxis, required for maintaining the direction of cell movement, suppressing lateral pseudopod extension, and proper retraction of the posterior of chemotaxing cells. This Dictyostelium discoideum (Social amoeba) protein is Serine/threonine-protein kinase pakA (pakA).